The sequence spans 158 residues: SsrA-binding protein (158 aa).

The interval 135-158 (DKRKTLKDRDWERDKQRGFKKDLD) is disordered. Over residues 141–158 (KDRDWERDKQRGFKKDLD) the composition is skewed to basic and acidic residues.

Belongs to the SmpB family.

Its subcellular location is the cytoplasm. In terms of biological role, required for rescue of stalled ribosomes mediated by trans-translation. Binds to transfer-messenger RNA (tmRNA), required for stable association of tmRNA with ribosomes. tmRNA and SmpB together mimic tRNA shape, replacing the anticodon stem-loop with SmpB. tmRNA is encoded by the ssrA gene; the 2 termini fold to resemble tRNA(Ala) and it encodes a 'tag peptide', a short internal open reading frame. During trans-translation Ala-aminoacylated tmRNA acts like a tRNA, entering the A-site of stalled ribosomes, displacing the stalled mRNA. The ribosome then switches to translate the ORF on the tmRNA; the nascent peptide is terminated with the 'tag peptide' encoded by the tmRNA and targeted for degradation. The ribosome is freed to recommence translation, which seems to be the essential function of trans-translation. This Psychrobacter arcticus (strain DSM 17307 / VKM B-2377 / 273-4) protein is SsrA-binding protein.